We begin with the raw amino-acid sequence, 284 residues long: RNase adapter protein RapZ (284 aa).

Gly8 to Ser15 is a binding site for ATP. GTP is bound at residue Asp56–Asn59. The tract at residues Arg266–Glu284 is RNA-binding.

The protein belongs to the RapZ-like family. RapZ subfamily. Homotrimer.

Its function is as follows. Modulates the synthesis of GlmS, by affecting the processing and stability of the regulatory small RNA GlmZ. When glucosamine-6-phosphate (GlcN6P) concentrations are high in the cell, RapZ binds GlmZ and targets it to cleavage by RNase E. Consequently, GlmZ is inactivated and unable to activate GlmS synthesis. Under low GlcN6P concentrations, RapZ is sequestered and inactivated by an other regulatory small RNA, GlmY, preventing GlmZ degradation and leading to synthesis of GlmS. This Hamiltonella defensa subsp. Acyrthosiphon pisum (strain 5AT) protein is RNase adapter protein RapZ.